The sequence spans 70 residues: Large ribosomal subunit protein eL38 (70 aa).

The protein belongs to the eukaryotic ribosomal protein eL38 family.

This is Large ribosomal subunit protein eL38 (RpL38) from Julodis onopordi (Jewel beetle).